Consider the following 268-residue polypeptide: Gene 65 protein (268 aa).

This Mycobacterium (Mycobacteriophage L5) protein is Gene 65 protein (65).